The sequence spans 581 residues: Tail sheath protein (581 aa).

It belongs to the myoviridae tail sheath protein family. In terms of assembly, homomultimer.

It localises to the virion. The protein localises to the host cytoplasm. In terms of biological role, polymerizes as an extended structure around the baseplate-tail tube complex. During ejection, the sheath shifts to a contracted form, thereby making the inner tail tube protrude through the host cell envelope. The chain is Tail sheath protein from Mycobacterium phage Bxz1 (Mycobacteriophage Bxz1).